Reading from the N-terminus, the 240-residue chain is 1-(5-phosphoribosyl)-5-[(5-phosphoribosylamino)methylideneamino] imidazole-4-carboxamide isomerase (240 aa).

The active-site Proton acceptor is D9. D131 functions as the Proton donor in the catalytic mechanism.

The protein belongs to the HisA/HisF family.

It localises to the cytoplasm. It carries out the reaction 1-(5-phospho-beta-D-ribosyl)-5-[(5-phospho-beta-D-ribosylamino)methylideneamino]imidazole-4-carboxamide = 5-[(5-phospho-1-deoxy-D-ribulos-1-ylimino)methylamino]-1-(5-phospho-beta-D-ribosyl)imidazole-4-carboxamide. The protein operates within amino-acid biosynthesis; L-histidine biosynthesis; L-histidine from 5-phospho-alpha-D-ribose 1-diphosphate: step 4/9. The polypeptide is 1-(5-phosphoribosyl)-5-[(5-phosphoribosylamino)methylideneamino] imidazole-4-carboxamide isomerase (Azobacteroides pseudotrichonymphae genomovar. CFP2).